Reading from the N-terminus, the 489-residue chain is 5-hydroxytryptamine receptor 3A (489 aa).

The first 23 residues, 1-23 (MRLCIPQVLLALFLSMLTAPGEG), serve as a signal peptide directing secretion. Residues 24–246 (SRRRATQARD…MKFYVIIRRR (223 aa)) are Extracellular-facing. N-linked (GlcNAc...) asparagine glycans are attached at residues Asn-109, Asn-175, and Asn-191. Cys-162 and Cys-176 are oxidised to a cystine. A helical membrane pass occupies residues 247-273 (PLFYAVSLLLPSIFLMVVDIVGFCLPP). Topologically, residues 274–278 (DSGER) are cytoplasmic. A helical transmembrane segment spans residues 279–297 (VSFKITLLLGYSVFLIIVS). Residues 298-307 (DTLPATAIGT) are Extracellular-facing. A helical membrane pass occupies residues 308–326 (PLIGVYFVVCMALLVISLA). The Cytoplasmic portion of the chain corresponds to 327–466 (ETIFIVRLVH…GYVLDRLLFR (140 aa)). Residues 425–461 (AVRGLLQELSSIRHFLEKRDEMREVARDWLRVGYVLD) form an HA-stretch; determines single-channel conductance in 5-HT3 receptors region. Residues 467–486 (IYLLAVLAYSITLVTLWSIW) form a helical membrane-spanning segment. Residues 487-489 (HYS) are Extracellular-facing.

The protein belongs to the ligand-gated ion channel (TC 1.A.9) family. 5-hydroxytryptamine receptor (TC 1.A.9.2) subfamily. HTR3A sub-subfamily. In terms of assembly, forms homopentameric as well as heteropentameric serotonin-activated cation-selective channel complexes with HTR3B or HTR3C or HTR3D or HTR3E. The homomeric complex is functional but exhibits low conductance with modified voltage dependence, and decreased agonist and antagonist affinity. Heteropentameric complexes display properties which resemble that of neuronal serotonin-activated channels in vivo. Interacts with RIC3. Brain, spinal cord, and heart.

The protein localises to the postsynaptic cell membrane. It localises to the cell membrane. The enzyme catalyses Na(+)(in) = Na(+)(out). The catalysed reaction is K(+)(in) = K(+)(out). It catalyses the reaction Ca(2+)(in) = Ca(2+)(out). It carries out the reaction Mg(2+)(in) = Mg(2+)(out). Its function is as follows. Forms serotonin (5-hydroxytryptamine/5-HT3)-activated cation-selective channel complexes, which when activated cause fast, depolarizing responses in neurons. The chain is 5-hydroxytryptamine receptor 3A from Mus musculus (Mouse).